The chain runs to 158 residues: Endoribonuclease YbeY (158 aa).

Positions 119, 123, and 129 each coordinate Zn(2+).

Belongs to the endoribonuclease YbeY family. Zn(2+) serves as cofactor.

The protein resides in the cytoplasm. Its function is as follows. Single strand-specific metallo-endoribonuclease involved in late-stage 70S ribosome quality control and in maturation of the 3' terminus of the 16S rRNA. The sequence is that of Endoribonuclease YbeY from Chlamydia felis (strain Fe/C-56) (Chlamydophila felis).